Here is a 623-residue protein sequence, read N- to C-terminus: Sterol O-acyltransferase 1 (623 aa).

The disordered stretch occupies residues 20–99; sequence NSAEPSKRHS…EQAEEKYPVD (80 aa). Residues 57–72 show a composition bias toward low complexity; it reads ATTTATGVAVAAAAAA. Over residues 83–92 the composition is skewed to acidic residues; the sequence is DGDDEQDEQA. 5 consecutive transmembrane segments (helical) span residues 195–215, 242–262, 277–297, 384–404, and 422–442; these read LESNFSGIYVFAWMFMGWIAF, LFTIALLDLALFLSTFFVVFV, GFVAVSLFELCFIPVSFPVYV, ISCSNYFMFCMFPVLVYQINY, and IMGTIFLMMVTAQIFMHPVAM. Residues 504 to 510 carry the FYXDWWN motif motif; that stretch reads FYGDWWN. 2 consecutive transmembrane segments (helical) span residues 548–568 and 603–623; these read ATLFTFLLSAVFHEIAMFAIF and VVFTFGVCTGPSMIMTLYLTL. His-560 is an active-site residue.

This sequence belongs to the membrane-bound acyltransferase family. Sterol o-acyltransferase subfamily.

Its subcellular location is the endoplasmic reticulum membrane. Sterol O-acyltransferase that catalyzes the formation of stery esters. This chain is Sterol O-acyltransferase 1 (ARE1), found in Saccharomyces uvarum (strain ATCC 76518 / CBS 7001 / CLIB 283 / NBRC 10550 / MCYC 623 / NCYC 2669 / NRRL Y-11845) (Yeast).